Consider the following 257-residue polypeptide: Acetylglutamate kinase (257 aa).

Residues 43–44 (GG), Arg-65, and Asn-157 contribute to the substrate site. ATP-binding positions include 180–185 (DVSGIL) and 208–210 (IIT).

Belongs to the acetylglutamate kinase family. ArgB subfamily. In terms of assembly, homodimer.

It is found in the cytoplasm. It carries out the reaction N-acetyl-L-glutamate + ATP = N-acetyl-L-glutamyl 5-phosphate + ADP. The protein operates within amino-acid biosynthesis; L-arginine biosynthesis; N(2)-acetyl-L-ornithine from L-glutamate: step 2/4. Its function is as follows. Catalyzes the ATP-dependent phosphorylation of N-acetyl-L-glutamate. The polypeptide is Acetylglutamate kinase (Salmonella paratyphi B (strain ATCC BAA-1250 / SPB7)).